A 380-amino-acid chain; its full sequence is tRNA-specific 2-thiouridylase MnmA (380 aa).

ATP is bound by residues 14-21 (GLSGGVDS) and Met40. Residues 100–102 (NPD) are interaction with target base in tRNA. The Nucleophile role is filled by Cys105. Cys105 and Cys203 form a disulfide bridge. Gly129 lines the ATP pocket. The interaction with tRNA stretch occupies residues 153-155 (KDQ). Cys203 functions as the Cysteine persulfide intermediate in the catalytic mechanism. Residues 322 to 323 (RY) are interaction with tRNA.

The protein belongs to the MnmA/TRMU family.

The protein resides in the cytoplasm. It carries out the reaction S-sulfanyl-L-cysteinyl-[protein] + uridine(34) in tRNA + AH2 + ATP = 2-thiouridine(34) in tRNA + L-cysteinyl-[protein] + A + AMP + diphosphate + H(+). Functionally, catalyzes the 2-thiolation of uridine at the wobble position (U34) of tRNA, leading to the formation of s(2)U34. The polypeptide is tRNA-specific 2-thiouridylase MnmA (Leptothrix cholodnii (strain ATCC 51168 / LMG 8142 / SP-6) (Leptothrix discophora (strain SP-6))).